A 316-amino-acid polypeptide reads, in one-letter code: Protoheme IX farnesyltransferase (316 aa).

The next 9 helical transmembrane spans lie at 28-48 (IIPL…KGQV), 50-70 (PLLL…AQTL), 99-119 (HALI…VFFV), 122-142 (LSGF…THLL), 150-170 (IVIG…AVTG), 178-198 (ILFA…ALMI), 223-243 (IWLY…PLAA), 244-264 (CGVV…KKAW), and 293-313 (AMVI…ASLF).

It belongs to the UbiA prenyltransferase family. Protoheme IX farnesyltransferase subfamily.

The protein resides in the cell inner membrane. It carries out the reaction heme b + (2E,6E)-farnesyl diphosphate + H2O = Fe(II)-heme o + diphosphate. It participates in porphyrin-containing compound metabolism; heme O biosynthesis; heme O from protoheme: step 1/1. Its function is as follows. Converts heme B (protoheme IX) to heme O by substitution of the vinyl group on carbon 2 of heme B porphyrin ring with a hydroxyethyl farnesyl side group. The sequence is that of Protoheme IX farnesyltransferase from Microcystis aeruginosa (strain NIES-843 / IAM M-2473).